Consider the following 878-residue polypeptide: MSSDNNDNNNNHSYKEANYYNYYRLLENNLKKKSRGLFLTENNKKKSKVFKLTKFSIDTEINDCSSTSKWTQIYSNDSKTPIEARYKIPLHPTWIITDFRVESQDKVVVLIGKIKEHEKALNNYNDTIANGGQSFLASKSSIEDLDFFNLNIGNLPPNETVKITLTITSEIGTHINGQLHYYLHHSLFPTYNFNFNLNIIIKLSNSIESIINWYGNSKRILNINSSNTGCGSDDGDDDVIKVLYNNSNNKEIKIKSNDKLNSIEDSLVLIIQPSIINDEPKSMIEYNKIENSLAVSINYYSSFKDIKIEDMNQKSEFIFLIDCSGSMVGEPMRKVKRAMEIIIRSLNENQHRVNVVCFGSSFKKVFKVSRDYNDETLECLSKYIQSIEANLGGTELLTPIKNILSSPPNPEYPRQLFILTDGEAPHRDKIIHYLSKESNTTRIFTYGIGDSVDIDLIIGLSNACKGHYEFITDNDNFEKQVMKLLNISLKPMFSNIKLDLSTLFSNNKNKNKNNNNCKEDIIIQSPSQIRPLFYQERMIVYLMIESLSTRLKDIINDSIENSKPLIITMTCDGPKGDKLSIPIELDLKNNCIISSSSSSSSSSSSSSSSSSSSSSSSSSSSSSTTTATTNQNQIHRLSAYHQIKDLEEKERKKKKDNKTRIVELSKKYGILSKHTSFIVKCESTKPTLESMDFIDIIDQFSFENQVSATKNKSQCLLTKSKKSKTAAPTTTTTTTITKKRFSDVDEDISRQSVKKSKKSETKEETTKTTSSKTKSSSSFDLIDLLRIQRANGSWTKSTISQMGISIGNAPVELSSDQLYNIWVTLIVISKIIKLFPNEKIEYEFAIQKSKKWVKLELSKLNLPNTTFDKFSLKANSLC.

Residues 36-169 form the VIT domain; the sequence is GLFLTENNKK…TVKITLTITS (134 aa). The region spanning 316-496 is the VWFA domain; it reads EFIFLIDCSG…ISLKPMFSNI (181 aa). The span at 595-623 shows a compositional bias: low complexity; sequence SSSSSSSSSSSSSSSSSSSSSSSSSSSSS. Disordered regions lie at residues 595 to 638 and 752 to 774; these read SSSS…HRLS and SVKKSKKSETKEETTKTTSSKTK. The segment covering 624-635 has biased composition (polar residues); sequence TTTATTNQNQIH.

The chain is von Willebrand factor A domain-containing protein DDB_G0267758 from Dictyostelium discoideum (Social amoeba).